The following is a 157-amino-acid chain: Lipoprotein signal peptidase (157 aa).

4 consecutive transmembrane segments (helical) span residues 10–30, 36–56, 58–78, and 84–104; these read LVFI…KHAI, YESL…FSLL, FLEG…FIFL, and LFKN…SNVL. Active-site residues include D114 and D131. Residues 122–142 form a helical membrane-spanning segment; the sequence is FDFAIFNFADVMIDVGVGVLL.

This sequence belongs to the peptidase A8 family.

The protein resides in the cell inner membrane. It catalyses the reaction Release of signal peptides from bacterial membrane prolipoproteins. Hydrolyzes -Xaa-Yaa-Zaa-|-(S,diacylglyceryl)Cys-, in which Xaa is hydrophobic (preferably Leu), and Yaa (Ala or Ser) and Zaa (Gly or Ala) have small, neutral side chains.. Its pathway is protein modification; lipoprotein biosynthesis (signal peptide cleavage). This protein specifically catalyzes the removal of signal peptides from prolipoproteins. In Helicobacter pylori (strain P12), this protein is Lipoprotein signal peptidase.